Consider the following 576-residue polypeptide: Arginine--tRNA ligase (576 aa).

A 'HIGH' region motif is present at residues 126-136; the sequence is ANPTGPMHIGH.

Belongs to the class-I aminoacyl-tRNA synthetase family. As to quaternary structure, monomer.

It is found in the cytoplasm. The catalysed reaction is tRNA(Arg) + L-arginine + ATP = L-arginyl-tRNA(Arg) + AMP + diphosphate. The polypeptide is Arginine--tRNA ligase (Rickettsia peacockii (strain Rustic)).